The chain runs to 314 residues: MAFLEVGNHTAVTEFILLGLTDDPVLRVVLFTIILCIYLVTVMGNLSTILLIRVSSQLHHPMYFFLSHLASVDMGLSSSVTPNMLLNFLIERNTISYLGCGIQQSLADFFGSVECFLLAAMAYDRFMAICNPLLYSTKMSTKVCVQLVVGSYIGGFLNASLIMFYFFSFLFCGPNRVDHFFCDFAPLVELSCSDVSVSVIVISFSAGSVTMITVFVIAVSYSYILITILKMHSIEGRHKAFSTCTSHLTAVTLYYGTITFIYVMPKSSFSTDQNKVVSVFYMVMIPMLNPLIYSLRNNEIKGAIKRQLGKKMSC.

At 1-28 the chain is on the extracellular side; sequence MAFLEVGNHTAVTEFILLGLTDDPVLRV. An N-linked (GlcNAc...) asparagine glycan is attached at Asn8. The helical transmembrane segment at 29–49 threads the bilayer; the sequence is VLFTIILCIYLVTVMGNLSTI. The Cytoplasmic segment spans residues 50-57; sequence LLIRVSSQ. A helical transmembrane segment spans residues 58 to 78; sequence LHHPMYFFLSHLASVDMGLSS. Residues 79–102 are Extracellular-facing; sequence SVTPNMLLNFLIERNTISYLGCGI. Residues Cys100 and Cys192 are joined by a disulfide bond. The helical transmembrane segment at 103-123 threads the bilayer; sequence QQSLADFFGSVECFLLAAMAY. Residues 124–136 lie on the Cytoplasmic side of the membrane; sequence DRFMAICNPLLYS. Residues 137-157 form a helical membrane-spanning segment; that stretch reads TKMSTKVCVQLVVGSYIGGFL. Topologically, residues 158-199 are extracellular; the sequence is NASLIMFYFFSFLFCGPNRVDHFFCDFAPLVELSCSDVSVSV. Residues 200 to 220 form a helical membrane-spanning segment; sequence IVISFSAGSVTMITVFVIAVS. Topologically, residues 221 to 240 are cytoplasmic; that stretch reads YSYILITILKMHSIEGRHKA. A helical transmembrane segment spans residues 241–261; sequence FSTCTSHLTAVTLYYGTITFI. Residues 262-274 lie on the Extracellular side of the membrane; that stretch reads YVMPKSSFSTDQN. A helical membrane pass occupies residues 275-295; it reads KVVSVFYMVMIPMLNPLIYSL. At 296–314 the chain is on the cytoplasmic side; the sequence is RNNEIKGAIKRQLGKKMSC.

It belongs to the G-protein coupled receptor 1 family.

It localises to the cell membrane. Potential odorant receptor. This Mus musculus (Mouse) protein is Olfactory receptor 5P72.